The primary structure comprises 514 residues: Probable drug/proton antiporter YHK8 (514 aa).

At 1–74 (MVAEFQIASA…RHMSTARRYY (74 aa)) the chain is on the cytoplasmic side. The chain crosses the membrane as a helical span at residues 75–95 (ISSLITFTSMVITMISSSWTL). Over 96–111 (PSTHIIEHFHISHEVS) the chain is Extracellular. The helical transmembrane segment at 112–132 (TLGITLYVFGLGIGPLFLSPL) threads the bilayer. At 133-141 (SELYGRRIT) the chain is on the cytoplasmic side. A helical transmembrane segment spans residues 142–162 (FLYALTLSIIWQCLTIWSKTI). Residues 163–170 (TGVMFGRF) lie on the Extracellular side of the membrane. The helical transmembrane segment at 171-191 (LSGFFGSAFLSVAGGAIADIF) threads the bilayer. Residues 192-200 (DKDQIGIPM) are Cytoplasmic-facing. Residues 201-221 (AIYTTSAFLGPSLGPIIGGAL) form a helical membrane-spanning segment. At 222 to 227 (YHQSYK) the chain is on the extracellular side. The helical transmembrane segment at 228 to 248 (WTFITLLITSGCCLVMIIFTI) threads the bilayer. Residues 249 to 307 (PETYKPMLLIRKAKRLRKEKNDQRYYAVLEVTREQTSLLSAIFLSTKRPFGLLLRDRMM) lie on the Cytoplasmic side of the membrane. A helical membrane pass occupies residues 308-328 (GVLCFYTGLELAIIYLYFVAF). At 329–342 (PYVFKKLYNFGPME) the chain is on the extracellular side. The helical transmembrane segment at 343 to 363 (IACSYIGIMVGMILSAPTCLL) threads the bilayer. The Cytoplasmic segment spans residues 364–386 (FQKTFEWRVKRNNGVKTPEMRFE). A helical transmembrane segment spans residues 387–407 (PLFYGAFLTPVGLFIFAFTCY). The Extracellular portion of the chain corresponds to 408 to 412 (KHVHW). The helical transmembrane segment at 413-433 (IAPIIGSAIFGSGVYFVFTGV) threads the bilayer. At 434-447 (FAYTVDAYRRYAAS) the chain is on the cytoplasmic side. Residues 448–468 (GMACNTFVRCIMAGVFPLFGL) form a helical membrane-spanning segment. At 469–477 (QMYKSMGVN) the chain is on the extracellular side. The helical transmembrane segment at 478–498 (WAGFLLAMVTVAMIPVPFLFT) threads the bilayer. Over 499–514 (KYGARLRAKSPYAWDD) the chain is Cytoplasmic.

It belongs to the major facilitator superfamily. CAR1 family.

The protein resides in the membrane. In terms of biological role, probable drug/proton antiporter. The protein is Probable drug/proton antiporter YHK8 (YHK8) of Saccharomyces cerevisiae (strain ATCC 204508 / S288c) (Baker's yeast).